The sequence spans 234 residues: Uracil-DNA glycosylase (234 aa).

Asp-68 serves as the catalytic Proton acceptor.

Belongs to the uracil-DNA glycosylase (UDG) superfamily. UNG family.

Its subcellular location is the cytoplasm. It carries out the reaction Hydrolyzes single-stranded DNA or mismatched double-stranded DNA and polynucleotides, releasing free uracil.. Functionally, excises uracil residues from the DNA which can arise as a result of misincorporation of dUMP residues by DNA polymerase or due to deamination of cytosine. In Ruegeria sp. (strain TM1040) (Silicibacter sp.), this protein is Uracil-DNA glycosylase.